A 190-amino-acid polypeptide reads, in one-letter code: Probable gluconokinase (190 aa).

Residue 7 to 14 (GVSGSGKT) participates in ATP binding.

It belongs to the gluconokinase GntK/GntV family.

It carries out the reaction D-gluconate + ATP = 6-phospho-D-gluconate + ADP + H(+). It participates in carbohydrate acid metabolism; D-gluconate degradation. This is Probable gluconokinase (idnk) from Xenopus tropicalis (Western clawed frog).